We begin with the raw amino-acid sequence, 54 residues long: Large ribosomal subunit protein bL32 (54 aa).

The segment at 1–26 is disordered; it reads MAVQKNKPTRSKRGMRRSHDSLTAPH. Basic residues predominate over residues 7-16; that stretch reads KPTRSKRGMR.

This sequence belongs to the bacterial ribosomal protein bL32 family.

The protein is Large ribosomal subunit protein bL32 of Buchnera aphidicola subsp. Acyrthosiphon pisum (strain 5A).